Consider the following 308-residue polypeptide: Transcription initiation factor IIB (308 aa).

A run of 2 repeats spans residues 124–207 (NELE…LREL) and 218–299 (DYVT…ELTQ).

The protein belongs to the TFIIB family.

In terms of biological role, stabilizes TBP binding to an archaeal box-A promoter. Also responsible for recruiting RNA polymerase II to the pre-initiation complex (DNA-TBP-TFIIB). In Sulfurisphaera tokodaii (strain DSM 16993 / JCM 10545 / NBRC 100140 / 7) (Sulfolobus tokodaii), this protein is Transcription initiation factor IIB.